The sequence spans 447 residues: Beta-glucuronosyltransferase GlcAT14A (447 aa).

Over 1–33 (MKKLRSYYSNVRHHQNHHHHHHHHSNIVSSERK) the chain is Cytoplasmic. Residues 34-54 (WIFFPLLIGSIFALFLLFLTT) form a helical; Signal-anchor for type II membrane protein membrane-spanning segment. Residues 55–447 (TLTSPTGGVR…TENFRSKQCK (393 aa)) lie on the Lumenal side of the membrane. N-linked (GlcNAc...) asparagine glycans are attached at residues N151, N200, N329, and N405.

It belongs to the glycosyltransferase 14 family.

The protein localises to the golgi apparatus membrane. In terms of biological role, beta-glucuronosyltransferase involved in the biosynthesis of type II arabinogalactan (AG). Modifies both the beta-1,6-linked galactan and beta-1,3-linked galactan present in type II AG. Transfers glucuronate to beta-1,6-galactooligosaccharides with degrees of polymerization ranging from 3 to 11. Transfers glucuronate to beta-1,3-galactooligosaccharides with degrees of polymerization ranging from 5 to 7. The addition of glucuronate at the O6 position may terminate galactose chain extension. Required for cell elongation during seedling growth. In Arabidopsis thaliana (Mouse-ear cress), this protein is Beta-glucuronosyltransferase GlcAT14A.